Reading from the N-terminus, the 534-residue chain is CTP synthase (534 aa).

Positions 1-267 (MTKYIFVTGG…DQIVCDHLKL (267 aa)) are amidoligase domain. S13 lines the CTP pocket. S13 serves as a coordination point for UTP. 14-19 (SIGKGI) provides a ligand contact to ATP. Y54 lines the L-glutamine pocket. ATP is bound at residue D71. Mg(2+)-binding residues include D71 and E141. CTP is bound by residues 148–150 (DIE), 188–193 (KTKPTQ), and K224. UTP-binding positions include 188–193 (KTKPTQ) and K224. One can recognise a Glutamine amidotransferase type-1 domain in the interval 292-534 (KIALVGKYVE…FVTAAVENMK (243 aa)). G354 provides a ligand contact to L-glutamine. C381 functions as the Nucleophile; for glutamine hydrolysis in the catalytic mechanism. Residues 382 to 385 (LGMQ), E405, and R463 each bind L-glutamine. Catalysis depends on residues H508 and E510.

It belongs to the CTP synthase family. Homotetramer.

It carries out the reaction UTP + L-glutamine + ATP + H2O = CTP + L-glutamate + ADP + phosphate + 2 H(+). The catalysed reaction is L-glutamine + H2O = L-glutamate + NH4(+). The enzyme catalyses UTP + NH4(+) + ATP = CTP + ADP + phosphate + 2 H(+). It participates in pyrimidine metabolism; CTP biosynthesis via de novo pathway; CTP from UDP: step 2/2. Allosterically activated by GTP, when glutamine is the substrate; GTP has no effect on the reaction when ammonia is the substrate. The allosteric effector GTP functions by stabilizing the protein conformation that binds the tetrahedral intermediate(s) formed during glutamine hydrolysis. Inhibited by the product CTP, via allosteric rather than competitive inhibition. In terms of biological role, catalyzes the ATP-dependent amination of UTP to CTP with either L-glutamine or ammonia as the source of nitrogen. Regulates intracellular CTP levels through interactions with the four ribonucleotide triphosphates. In Streptococcus agalactiae serotype Ia (strain ATCC 27591 / A909 / CDC SS700), this protein is CTP synthase.